We begin with the raw amino-acid sequence, 906 residues long: Coatomer subunit beta' (906 aa).

WD repeat units lie at residues 13–52, 55–94, 97–136, 140–180, 183–224, 227–266, 350–388, and 390–425; these read ARSD…LVKT, VCDL…RVHM, AHSD…SCSQ, GHTH…PNFT, GHEK…CVQT, GHAQ…LEST, SCEI…NKSF, and SAQE…KSFK. K627 is subject to N6-acetyllysine. The WD 9 repeat unit spans residues 746–783; the sequence is IRTGRLPEAAFLARTYLPSQVSRVVKLWRENLSKVNQK. The interval 837–863 is disordered; sequence EEAKGFQPSRSTAQQELDGKPASPTPV. S859 is subject to Phosphoserine. The residue at position 861 (T861) is a Phosphothreonine. A coiled-coil region spans residues 866-890; sequence ASHTANKEEKSLLELEVDLDNLELV.

Belongs to the WD repeat COPB2 family. In terms of assembly, oligomeric complex that consists of at least the alpha, beta, beta', gamma, delta, epsilon and zeta subunits. Probably interacts with PEX11A. Interacts with SCYL1. Interacts with JAGN1.

It localises to the cytoplasm. The protein localises to the cytosol. The protein resides in the golgi apparatus membrane. It is found in the cytoplasmic vesicle. Its subcellular location is the COPI-coated vesicle membrane. Its function is as follows. The coatomer is a cytosolic protein complex that binds to dilysine motifs and reversibly associates with Golgi non-clathrin-coated vesicles, which further mediate biosynthetic protein transport from the ER, via the Golgi up to the trans Golgi network. Coatomer complex is required for budding from Golgi membranes, and is essential for the retrograde Golgi-to-ER transport of dilysine-tagged proteins. In mammals, the coatomer can only be recruited by membranes associated to ADP-ribosylation factors (ARFs), which are small GTP-binding proteins; the complex also influences the Golgi structural integrity, as well as the processing, activity, and endocytic recycling of LDL receptors. Functionally, this coatomer complex protein, essential for Golgi budding and vesicular trafficking, is a selective binding protein (RACK) for protein kinase C, epsilon type. It binds to Golgi membranes in a GTP-dependent manner. The chain is Coatomer subunit beta' (COPB2) from Pongo abelii (Sumatran orangutan).